Consider the following 229-residue polypeptide: Peptidase E (229 aa).

Residues serine 120, aspartate 135, and histidine 157 each act as charge relay system in the active site.

This sequence belongs to the peptidase S51 family.

Its subcellular location is the cytoplasm. It carries out the reaction Dipeptidase E catalyzes the hydrolysis of dipeptides Asp-|-Xaa. It does not act on peptides with N-terminal Glu, Asn or Gln, nor does it cleave isoaspartyl peptides.. Functionally, hydrolyzes dipeptides containing N-terminal aspartate residues. May play a role in allowing the cell to use peptide aspartate to spare carbon otherwise required for the synthesis of the aspartate family of amino acids. The polypeptide is Peptidase E (Salmonella arizonae (strain ATCC BAA-731 / CDC346-86 / RSK2980)).